Consider the following 83-residue polypeptide: Exodeoxyribonuclease 7 small subunit (83 aa).

Belongs to the XseB family. In terms of assembly, heterooligomer composed of large and small subunits.

The protein localises to the cytoplasm. The enzyme catalyses Exonucleolytic cleavage in either 5'- to 3'- or 3'- to 5'-direction to yield nucleoside 5'-phosphates.. In terms of biological role, bidirectionally degrades single-stranded DNA into large acid-insoluble oligonucleotides, which are then degraded further into small acid-soluble oligonucleotides. This Brucella melitensis biotype 1 (strain ATCC 23456 / CCUG 17765 / NCTC 10094 / 16M) protein is Exodeoxyribonuclease 7 small subunit.